Reading from the N-terminus, the 209-residue chain is Small ribosomal subunit protein uS3 (209 aa).

One can recognise a KH type-2 domain in the interval 17–86 (IDEYLEKELR…NPQIEVEEIK (70 aa)).

It belongs to the universal ribosomal protein uS3 family. As to quaternary structure, part of the 30S ribosomal subunit.

Functionally, binds the lower part of the 30S subunit head. The chain is Small ribosomal subunit protein uS3 from Thermococcus gammatolerans (strain DSM 15229 / JCM 11827 / EJ3).